We begin with the raw amino-acid sequence, 142 residues long: Hemoglobin subunit alpha (142 aa).

Residue Ser1 is modified to N-acetylserine. The 142-residue stretch at 1–142 (SLSDKDKAVV…LALALSEKYR (142 aa)) folds into the Globin domain. His59 serves as a coordination point for O2. His88 serves as a coordination point for heme b.

The protein belongs to the globin family. In terms of assembly, heterotetramer of two alpha chains and two beta chains. As to expression, red blood cells.

Involved in oxygen transport from gills to the various peripheral tissues. The chain is Hemoglobin subunit alpha (hba) from Carassius auratus (Goldfish).